A 310-amino-acid polypeptide reads, in one-letter code: Ribosomal RNA small subunit methyltransferase H (310 aa).

S-adenosyl-L-methionine is bound by residues G32–H34, D52, F79, D100, and Q107.

Belongs to the methyltransferase superfamily. RsmH family.

It is found in the cytoplasm. It carries out the reaction cytidine(1402) in 16S rRNA + S-adenosyl-L-methionine = N(4)-methylcytidine(1402) in 16S rRNA + S-adenosyl-L-homocysteine + H(+). Its function is as follows. Specifically methylates the N4 position of cytidine in position 1402 (C1402) of 16S rRNA. This is Ribosomal RNA small subunit methyltransferase H from Bacillus cereus (strain AH187).